The following is a 746-amino-acid chain: Eukaryotic translation initiation factor 3 subunit B (746 aa).

Over residues 1–11 (MAPSYEHLREA) the composition is skewed to basic and acidic residues. Residues 1 to 20 (MAPSYEHLREADLDEDEFDE) are disordered. The RRM domain maps to 42–128 (TFVVIDGLPE…HTLRVNKLMD (87 aa)). WD repeat units lie at residues 195-234 (DRPN…RLGR), 247-294 (PQEN…RSFA), 307-346 (PRKH…LLDK), 349-386 (IKVE…IGSN), 458-500 (TIKD…FFCP), 517-560 (LDKR…EKPE), and 575-620 (ADHY…LREE).

Belongs to the eIF-3 subunit B family. As to quaternary structure, component of the eukaryotic translation initiation factor 3 (eIF-3) complex.

Its subcellular location is the cytoplasm. RNA-binding component of the eukaryotic translation initiation factor 3 (eIF-3) complex, which is involved in protein synthesis of a specialized repertoire of mRNAs and, together with other initiation factors, stimulates binding of mRNA and methionyl-tRNAi to the 40S ribosome. The eIF-3 complex specifically targets and initiates translation of a subset of mRNAs involved in cell proliferation. This chain is Eukaryotic translation initiation factor 3 subunit B, found in Pyricularia oryzae (strain 70-15 / ATCC MYA-4617 / FGSC 8958) (Rice blast fungus).